A 277-amino-acid polypeptide reads, in one-letter code: MAIYAIGDIQGCFEPFQQLLRLIDFNPGKDTLWLTGDLVNRGPQSLEVLRWVFQHQDQVEMVLGNHDLHLLAVSEGFGKIHRDDTIDDVLNAADGKVLLDWLRCQPMMLEGHGYAMVHAGLLPEWTISKALRLAEEVEFGLSGTRYREFLGRLYGNKPTRWTDDLKGVDRLRLIVNVMTRMRFLTRDGELDLSYKGELEGAPANLVPWFEAPNRRHGGTPIVCGHWSALGVHLDEDILAIDSGCLWGGSLSALRLDDKQLFSLPCQAYREIALATGR.

It belongs to the Ap4A hydrolase family.

It carries out the reaction P(1),P(4)-bis(5'-adenosyl) tetraphosphate + H2O = 2 ADP + 2 H(+). Hydrolyzes diadenosine 5',5'''-P1,P4-tetraphosphate to yield ADP. This Chromobacterium violaceum (strain ATCC 12472 / DSM 30191 / JCM 1249 / CCUG 213 / NBRC 12614 / NCIMB 9131 / NCTC 9757 / MK) protein is Bis(5'-nucleosyl)-tetraphosphatase, symmetrical.